Reading from the N-terminus, the 198-residue chain is MKEFIIKANKAVTNGEINLKDLPGSSGRLDLLCRCVNSAFFLSHDMRRDTIFYSVNYGDPNPPVTLKFVGSELKRVSPDERSIALFIKKALEKDATELWKESTSGIYSSKREFRDIILEKKNEGKRIFYLHLNGKPLEDFEFKDDEDFLFVLGDHIGIGDEDEEFLEEIGAEKISLSPLELHADHCIILVHNILDRLK.

S-adenosyl-L-methionine contacts are provided by residues L130, G153, 176 to 181 (LSPLEL), and C186.

Belongs to the methyltransferase superfamily. TrmY family. Homodimer.

The protein resides in the cytoplasm. It carries out the reaction pseudouridine(54) in tRNA + S-adenosyl-L-methionine = N(1)-methylpseudouridine(54) in tRNA + S-adenosyl-L-homocysteine + H(+). In terms of biological role, specifically catalyzes the N1-methylation of pseudouridine at position 54 (Psi54) in tRNAs. The chain is tRNA (pseudouridine(54)-N(1))-methyltransferase from Methanococcus maripaludis (strain C7 / ATCC BAA-1331).